Here is a 248-residue protein sequence, read N- to C-terminus: Putative mutator protein MutT4 (248 aa).

The segment at Met-1–Glu-64 is disordered. Residues Ser-9 to Arg-20 show a composition bias toward basic residues. Low complexity predominate over residues Ala-31–Ala-44. Positions Lys-45 to Thr-57 are enriched in basic residues. The Nudix hydrolase domain occupies Val-62–Asp-198. Gly-103, Glu-118, Glu-121, and Glu-122 together coordinate Mg(2+). The Nudix box signature appears at Gly-103 to Gly-124. Positions Leu-204–Pro-248 are disordered. A compositionally biased stretch (basic residues) spans Pro-220–Ala-230.

Belongs to the Nudix hydrolase family. The cofactor is Mg(2+). It depends on Mn(2+) as a cofactor.

Its function is as follows. May be involved in the GO system responsible for removing an oxidatively damaged form of guanine (7,8-dihydro-8-oxoguanine, 8-oxo-dGTP) from DNA and the nucleotide pool. This Mycobacterium tuberculosis (strain CDC 1551 / Oshkosh) protein is Putative mutator protein MutT4 (mutT4).